The chain runs to 237 residues: Ribosomal RNA small subunit methyltransferase G (237 aa).

S-adenosyl-L-methionine contacts are provided by residues Gly78, Phe83, 129 to 130 (AE), and Arg148. Residues 218–237 (KKETPNKYPRKAGMPNKRPL) form a disordered region.

Belongs to the methyltransferase superfamily. RNA methyltransferase RsmG family.

Its subcellular location is the cytoplasm. In terms of biological role, specifically methylates the N7 position of a guanine in 16S rRNA. This Streptococcus gordonii (strain Challis / ATCC 35105 / BCRC 15272 / CH1 / DL1 / V288) protein is Ribosomal RNA small subunit methyltransferase G.